Consider the following 142-residue polypeptide: Large ribosomal subunit protein uL13 (142 aa).

Belongs to the universal ribosomal protein uL13 family. As to quaternary structure, part of the 50S ribosomal subunit.

This protein is one of the early assembly proteins of the 50S ribosomal subunit, although it is not seen to bind rRNA by itself. It is important during the early stages of 50S assembly. The chain is Large ribosomal subunit protein uL13 from Buchnera aphidicola subsp. Acyrthosiphon pisum (strain 5A).